The primary structure comprises 312 residues: Glyoxylate/hydroxypyruvate reductase A (312 aa).

R227 is a catalytic residue. The active-site Proton donor is the H275.

Belongs to the D-isomer specific 2-hydroxyacid dehydrogenase family. GhrA subfamily.

Its subcellular location is the cytoplasm. It catalyses the reaction glycolate + NADP(+) = glyoxylate + NADPH + H(+). The enzyme catalyses (R)-glycerate + NAD(+) = 3-hydroxypyruvate + NADH + H(+). The catalysed reaction is (R)-glycerate + NADP(+) = 3-hydroxypyruvate + NADPH + H(+). Its function is as follows. Catalyzes the NADPH-dependent reduction of glyoxylate and hydroxypyruvate into glycolate and glycerate, respectively. The protein is Glyoxylate/hydroxypyruvate reductase A of Salmonella typhi.